The following is a 248-amino-acid chain: Triosephosphate isomerase (248 aa).

9–11 contacts substrate; it reads NWK. Residue histidine 94 is the Electrophile of the active site. The active-site Proton acceptor is glutamate 166. Residues glycine 172, serine 212, and 233 to 234 contribute to the substrate site; that span reads GG.

The protein belongs to the triosephosphate isomerase family. As to quaternary structure, homodimer.

It localises to the cytoplasm. The enzyme catalyses D-glyceraldehyde 3-phosphate = dihydroxyacetone phosphate. The protein operates within carbohydrate biosynthesis; gluconeogenesis. It functions in the pathway carbohydrate degradation; glycolysis; D-glyceraldehyde 3-phosphate from glycerone phosphate: step 1/1. Functionally, involved in the gluconeogenesis. Catalyzes stereospecifically the conversion of dihydroxyacetone phosphate (DHAP) to D-glyceraldehyde-3-phosphate (G3P). The polypeptide is Triosephosphate isomerase (Caldanaerobacter subterraneus subsp. tengcongensis (strain DSM 15242 / JCM 11007 / NBRC 100824 / MB4) (Thermoanaerobacter tengcongensis)).